Reading from the N-terminus, the 673-residue chain is Putative K(+)-stimulated pyrophosphate-energized sodium pump (673 aa).

5 helical membrane passes run 3–23, 62–82, 84–104, 127–147, and 154–174; these read SFIVYSVLAGVIALIFAFMLS, IVIVTVILAIFVGWQTAACFI, GAIFSIFAGYFGMNVATKANV, VMGMSVVGLGVVGIGIMYYIF, and VTGFGLGASSIALFARVGGGI. Substrate is bound at residue Lys-177. Asp-180, Asp-184, Asn-207, and Asp-210 together coordinate Mg(2+). A run of 6 helical transmembrane segments spans residues 222-242, 247-267, 279-299, 302-322, 364-384, and 387-407; these read LFESYVGSIISALTLGTVVYA, VMFPLILSSIGIVASIIGILF, ALNTGTYIGGIIVIVSAAILS, IFGNLKAFFAVASGLVVGMII, LWPIVLISIGVLVSFFVMGGG, and AMVGLYGISLAAVGMLSTTGL. Asp-419 provides a ligand contact to Mg(2+). 4 consecutive transmembrane segments (helical) span residues 449 to 469, 486 to 506, 553 to 573, and 576 to 596; these read AAIGKGFAIGSAALTALSLFA, VTLVGLFIGAMLPFLFGALTM, EMILPGVLAIVVPVAMGLLLG, and ALGGLLAGALVSGVLVGILMS. Ca(2+) is bound by residues Asp-603, Asp-629, and Asp-633. Residue Lys-636 coordinates substrate. Residues 652–672 form a helical membrane-spanning segment; sequence IVSLVFAPVVLQYGGILLNLI.

This sequence belongs to the H(+)-translocating pyrophosphatase (TC 3.A.10) family. K(+)-stimulated subfamily. Homodimer. Requires Mg(2+) as cofactor.

The protein localises to the cell membrane. The enzyme catalyses Na(+)(in) + diphosphate + H2O = Na(+)(out) + 2 phosphate + H(+). With respect to regulation, requires K(+) for maximal activity. In terms of biological role, sodium pump that utilizes the energy of pyrophosphate hydrolysis as the driving force for Na(+) movement across the membrane. The sequence is that of Putative K(+)-stimulated pyrophosphate-energized sodium pump from Clostridium tetani (strain Massachusetts / E88).